A 289-amino-acid chain; its full sequence is Cbb3-type cytochrome c oxidase subunit FixP (289 aa).

Residues 1–33 (MADKHKHVDEVSGVETTGHEWDGIRELNNPMPR) are Cytoplasmic-facing. Residues 34 to 56 (WWVYSFYATIIWAIGYAIAYPSW) traverse the membrane as a helical segment. Residues 57 to 289 (PMLTEATKGM…VFVHSLGGGE (233 aa)) lie on the Periplasmic side of the membrane. Cytochrome c domains follow at residues 110–198 (FAVS…VSLT) and 205–286 (HLVQ…HSLG). Positions 123, 126, 127, 175, 218, 221, 222, and 263 each coordinate heme c.

It belongs to the CcoP / FixP family. Component of the cbb3-type cytochrome c oxidase at least composed of FixN, FixO, FixQ and FixP. Heme c is required as a cofactor.

It localises to the cell inner membrane. The protein operates within energy metabolism; oxidative phosphorylation. In terms of biological role, C-type cytochrome. Part of the cbb3-type cytochrome c oxidase complex. FixP subunit is required for transferring electrons from donor cytochrome c via its heme groups to FixO subunit. From there, electrons are shuttled to the catalytic binuclear center of FixN subunit where oxygen reduction takes place. The complex also functions as a proton pump. The sequence is that of Cbb3-type cytochrome c oxidase subunit FixP from Rhizobium meliloti (strain 1021) (Ensifer meliloti).